Consider the following 418-residue polypeptide: Hepatic and glial cell adhesion molecule (418 aa).

An N-terminal signal peptide occupies residues 1 to 33; it reads MKREREAPSRAFSALRLAPFVYLLLIQTEPLEG. Residues 34–141 form the Ig-like V-type domain; sequence VNITSPVRLI…TGEKTINLTV (108 aa). At 34-240 the chain is on the extracellular side; that stretch reads VNITSPVRLI…VKITVYRRSS (207 aa). Asparagine 35, asparagine 138, asparagine 167, and asparagine 189 each carry an N-linked (GlcNAc...) asparagine glycan. An Ig-like C2-type domain is found at 148–234; sequence PQVLVASTTV…QGRSPPVKIT (87 aa). Cysteine 168 and cysteine 217 are joined by a disulfide. Residues 241–261 form a helical membrane-spanning segment; sequence LYIILSTGGIFLLVTLVTVCA. Residues 262–418 lie on the Cytoplasmic side of the membrane; it reads CWKPSKKSGK…DEAGPVEISA (157 aa). A disordered region spans residues 271 to 418; that stretch reads KKRKLEKQNS…DEAGPVEISA (148 aa). Serine 280 bears the Phosphoserine mark. Residues 287 to 308 are compositionally biased toward basic and acidic residues; sequence SDDRLKPEADTLPRSGEQERKN. Phosphoserine is present on residues serine 352 and serine 379. The span at 385-400 shows a compositional bias: low complexity; sequence GSPGRSRSASRTLRTA.

As to quaternary structure, homodimer. Dimer formation occurs predominantly through cis interactions on the cell surface. Part of a complex containing MLC1, TRPV4, AQP4 and ATP1B1. Interacts with CLCN2. N-glycosylated.

It is found in the cytoplasm. The protein localises to the cell membrane. Functionally, involved in regulating cell motility and cell-matrix interactions. May inhibit cell growth through suppression of cell proliferation. In glia, associates and targets CLCN2 at astrocytic processes and myelinated fiber tracts where it may regulate transcellular chloride flux involved in neuron excitability. In Bos taurus (Bovine), this protein is Hepatic and glial cell adhesion molecule.